A 445-amino-acid chain; its full sequence is UDP-N-acetylglucosamine--peptide N-acetylglucosaminyltransferase stabilizing protein GtfB (445 aa).

The tract at residues 55 to 171 (KPLYFNQVPV…TLPGQSMRYF (117 aa)) is glycosyltransferase 1.

It belongs to the GtfB family. As to quaternary structure, interacts with glycosyltransferase GtfA; probably forms a heterotetramer with 2 subunits each of GtfA and GtfB. Part of the accessory SecA2/SecY2 protein translocation apparatus.

It is found in the cell membrane. Its pathway is protein modification; protein glycosylation. Functionally, required for the polymorphic O-glycosylation of the serine-rich repeat protein PsrP. A stabilizing protein that is part of the accessory SecA2/SecY2 system specifically required to export serine-rich repeat cell wall proteins encoded upstream in the same operon. The GtfA-GtfB complex adds GlcNAc from UDP-GlcNAc to PsrP, attaching the first sugar residue. Stabilizes the glycosylation activity of GtfA. Has no N-acetylglucosaminyl transferase activity on its own. The polypeptide is UDP-N-acetylglucosamine--peptide N-acetylglucosaminyltransferase stabilizing protein GtfB (Streptococcus pneumoniae serotype 4 (strain ATCC BAA-334 / TIGR4)).